The primary structure comprises 378 residues: Probable G-protein coupled receptor frpr-1 (378 aa).

7 helical membrane-spanning segments follow: residues 47 to 67 (LVVI…GNAL), 85 to 105 (LFAL…LFFL), 120 to 140 (AVLS…SVFI), 180 to 200 (VIVC…YNSP), 243 to 263 (TIVM…AIVI), 277 to 297 (IITL…PLTV), and 315 to 337 (SNLM…GSNF).

Belongs to the G-protein coupled receptor 1 family.

It is found in the cell membrane. This is Probable G-protein coupled receptor frpr-1 from Caenorhabditis elegans.